The chain runs to 224 residues: Homeobox protein Hox-B6 (224 aa).

The Antp-type hexapeptide signature appears at 127-132 (VYPWMQ). The homeobox DNA-binding region spans 146 to 205 (GRRGRQTYTRYQTLELEKEFHYNRYLTRRRRIEIAHALCLTERQIKIWFQNRRMKWKKES). Position 214 is a phosphoserine (Ser214).

It belongs to the Antp homeobox family.

It localises to the nucleus. In terms of biological role, sequence-specific transcription factor which is part of a developmental regulatory system that provides cells with specific positional identities on the anterior-posterior axis. The protein is Homeobox protein Hox-B6 (Hoxb6) of Mus musculus (Mouse).